A 441-amino-acid chain; its full sequence is Xaa-Pro dipeptidase (441 aa).

Residues D244, D255, H336, E381, and E420 each coordinate Mn(2+).

Belongs to the peptidase M24B family. Bacterial-type prolidase subfamily. Mn(2+) serves as cofactor.

It carries out the reaction Xaa-L-Pro dipeptide + H2O = an L-alpha-amino acid + L-proline. Functionally, splits dipeptides with a prolyl residue in the C-terminal position. In Xanthomonas euvesicatoria pv. vesicatoria (strain 85-10) (Xanthomonas campestris pv. vesicatoria), this protein is Xaa-Pro dipeptidase.